The primary structure comprises 372 residues: DNA primase small subunit PriS (372 aa).

Active-site residues include aspartate 95, aspartate 97, and aspartate 280.

It belongs to the eukaryotic-type primase small subunit family. As to quaternary structure, heterodimer of a small subunit (PriS) and a large subunit (PriL). Mg(2+) serves as cofactor. Requires Mn(2+) as cofactor.

Its function is as follows. Catalytic subunit of DNA primase, an RNA polymerase that catalyzes the synthesis of short RNA molecules used as primers for DNA polymerase during DNA replication. The small subunit contains the primase catalytic core and has DNA synthesis activity on its own. Binding to the large subunit stabilizes and modulates the activity, increasing the rate of DNA synthesis while decreasing the length of the DNA fragments, and conferring RNA synthesis capability. The DNA polymerase activity may enable DNA primase to also catalyze primer extension after primer synthesis. May also play a role in DNA repair. This chain is DNA primase small subunit PriS, found in Cenarchaeum symbiosum (strain A).